A 161-amino-acid polypeptide reads, in one-letter code: MRVGSRLAVDVGKARIGLARSDPHGLIATPVETVPRDAAGSADVRRILEVAAEIDCTELVVGLPLALSGRATASTDDAEGFARRLADATEIRVRLVDERLSTVSAQGALRASGRGSRKQKPVIDQVAAVIILQHALETERAAGSPPGALVPRNRVDPDRHA.

Residues 142–161 (AGSPPGALVPRNRVDPDRHA) are disordered.

Belongs to the YqgF nuclease family.

The protein resides in the cytoplasm. Could be a nuclease involved in processing of the 5'-end of pre-16S rRNA. The chain is Putative pre-16S rRNA nuclease from Clavibacter sepedonicus (Clavibacter michiganensis subsp. sepedonicus).